We begin with the raw amino-acid sequence, 163 residues long: Calmodulin (163 aa).

An N-acetylalanine modification is found at Ala2. EF-hand domains are found at residues Glu11–Asn46, Pro47–Glu82, Asp84–Lys119, and Leu120–Asp155. Residues Asp24, Asp26, Asp28, Thr30, Glu35, Asp60, Asp62, Asn64, Thr66, Glu71, Asp97, Asp99, Asn101, Glu108, Asp133, Asp135, Asp137, Gln139, and Glu144 each coordinate Ca(2+).

It belongs to the calmodulin family. As to quaternary structure, associates with the spoke-associated complex containing CFAP61, CFAP91 and CFAP251; the association is calcium sensitive. Trimethylation of Lys-119 observed in other calmodulins is absent here.

It is found in the cytoplasm. The protein localises to the cytoskeleton. Its subcellular location is the flagellum axoneme. Calmodulin mediates the control of a large number of enzymes, ion channels and other proteins by Ca(2+). Among the enzymes to be stimulated by the calmodulin-Ca(2+) complex are a number of protein kinases and phosphatases. The protein is Calmodulin of Chlamydomonas reinhardtii (Chlamydomonas smithii).